The primary structure comprises 950 residues: 2-oxoglutarate dehydrogenase E1 component (950 aa).

This sequence belongs to the alpha-ketoglutarate dehydrogenase family. Homodimer. Part of the 2-oxoglutarate dehydrogenase (OGDH) complex composed of E1 (2-oxoglutarate dehydrogenase), E2 (dihydrolipoamide succinyltransferase) and E3 (dihydrolipoamide dehydrogenase); the complex contains multiple copies of the three enzymatic components (E1, E2 and E3). It depends on thiamine diphosphate as a cofactor.

It carries out the reaction N(6)-[(R)-lipoyl]-L-lysyl-[protein] + 2-oxoglutarate + H(+) = N(6)-[(R)-S(8)-succinyldihydrolipoyl]-L-lysyl-[protein] + CO2. Its function is as follows. E1 component of the 2-oxoglutarate dehydrogenase (OGDH) complex which catalyzes the decarboxylation of 2-oxoglutarate, the first step in the conversion of 2-oxoglutarate to succinyl-CoA and CO(2). The sequence is that of 2-oxoglutarate dehydrogenase E1 component (odhA) from Cupriavidus necator (strain ATCC 17699 / DSM 428 / KCTC 22496 / NCIMB 10442 / H16 / Stanier 337) (Ralstonia eutropha).